The following is a 188-amino-acid chain: Elongation factor P (188 aa).

Belongs to the elongation factor P family.

The protein resides in the cytoplasm. It participates in protein biosynthesis; polypeptide chain elongation. Functionally, involved in peptide bond synthesis. Stimulates efficient translation and peptide-bond synthesis on native or reconstituted 70S ribosomes in vitro. Probably functions indirectly by altering the affinity of the ribosome for aminoacyl-tRNA, thus increasing their reactivity as acceptors for peptidyl transferase. This is Elongation factor P (efp) from Rickettsia conorii (strain ATCC VR-613 / Malish 7).